Here is a 383-residue protein sequence, read N- to C-terminus: Na(+)/H(+) antiporter NhaA (383 aa).

The next 11 helical transmembrane spans lie at 14 to 34 (AGGI…NSPL), 47 to 67 (FGMS…FLLI), 87 to 107 (IFPA…YVAF), 117 to 137 (GWAI…ALLG), 146 to 166 (VFLL…IALF), 171 to 191 (LSTM…MLNA), 205 to 225 (AILW…GVVI), 252 to 272 (VAFG…LEGV), 280 to 300 (MLPL…IFTF), 321 to 341 (IFAV…ISSL), and 356 to 376 (LGIL…LHFS).

The protein belongs to the NhaA Na(+)/H(+) (TC 2.A.33) antiporter family.

Its subcellular location is the cell inner membrane. It carries out the reaction Na(+)(in) + 2 H(+)(out) = Na(+)(out) + 2 H(+)(in). Its function is as follows. Na(+)/H(+) antiporter that extrudes sodium in exchange for external protons. In Vibrio alginolyticus, this protein is Na(+)/H(+) antiporter NhaA.